The following is a 337-amino-acid chain: Autophagy protein 5 (337 aa).

K128 is covalently cross-linked (Glycyl lysine isopeptide (Lys-Gly) (interchain with G-Cter in ATG12)). A disordered region spans residues 271–290 (RAQTSGEERSIDDTEEADGS). A compositionally biased stretch (basic and acidic residues) spans 276-290 (GEERSIDDTEEADGS).

This sequence belongs to the ATG5 family. Conjugated to ATG12. In terms of processing, conjugated to ATG12; which is essential for autophagy. Conjugation with ATG12 involves ATG7 as an E1-like activating enzyme and ATG10 as an E2-like conjugating enzyme. Ubiquitous.

It is found in the cytoplasm. In terms of biological role, required for autophagy. Conjugation to ATG12 is essential for plant nutrient recycling. Involved in a negative feedback loop that modulates NPR1-dependent salicylic acid (SA) signaling and limits senescence and immunity-related programmed cell death (PCD) in plants. Involved in complete proteolysis of chloroplast stroma proteins in senescent leaves. Involved in the degradation of damaged peroxisomes. This chain is Autophagy protein 5, found in Arabidopsis thaliana (Mouse-ear cress).